We begin with the raw amino-acid sequence, 152 residues long: SsrA-binding protein (152 aa).

The protein belongs to the SmpB family.

It localises to the cytoplasm. In terms of biological role, required for rescue of stalled ribosomes mediated by trans-translation. Binds to transfer-messenger RNA (tmRNA), required for stable association of tmRNA with ribosomes. tmRNA and SmpB together mimic tRNA shape, replacing the anticodon stem-loop with SmpB. tmRNA is encoded by the ssrA gene; the 2 termini fold to resemble tRNA(Ala) and it encodes a 'tag peptide', a short internal open reading frame. During trans-translation Ala-aminoacylated tmRNA acts like a tRNA, entering the A-site of stalled ribosomes, displacing the stalled mRNA. The ribosome then switches to translate the ORF on the tmRNA; the nascent peptide is terminated with the 'tag peptide' encoded by the tmRNA and targeted for degradation. The ribosome is freed to recommence translation, which seems to be the essential function of trans-translation. The sequence is that of SsrA-binding protein from Rickettsia montanensis.